The chain runs to 95 residues: MAFKPLHDRVLVKRVQSEEKTKGGLIIPDTAKEKPAEGEVVAVGAGARKDSGELIAPAVAVGDRILFGKWSGTEVTLDGVEMLIMKESDIMGIIS.

The protein belongs to the GroES chaperonin family. In terms of assembly, heptamer of 7 subunits arranged in a ring. Interacts with the chaperonin GroEL.

It localises to the cytoplasm. Its function is as follows. Together with the chaperonin GroEL, plays an essential role in assisting protein folding. The GroEL-GroES system forms a nano-cage that allows encapsulation of the non-native substrate proteins and provides a physical environment optimized to promote and accelerate protein folding. GroES binds to the apical surface of the GroEL ring, thereby capping the opening of the GroEL channel. The sequence is that of Co-chaperonin GroES from Rhodobacter capsulatus (Rhodopseudomonas capsulata).